Here is a 186-residue protein sequence, read N- to C-terminus: Enhancer of split m7 protein (186 aa).

The bHLH domain maps to 13–68 (YRKVMKPLLERKRRARINKCLDELKDLMAECVAQTGDAKFEKADILEVTVQHLRKL). The Orange domain occupies 83-116 (FRAGYIRAANEVSRALASLPRVDVAFGTTLMTHL). The short motif at 183–186 (WRPW) is the WRPW motif element.

Transcription repression requires formation of a complex with a corepressor protein (Groucho). Forms homodimers.

It is found in the nucleus. In terms of biological role, participates in the control of cell fate choice by uncommitted neuroectodermal cells in the embryo. Transcriptional repressor. Binds DNA on N-box motifs: 5'-CACNAG-3'. This is Enhancer of split m7 protein from Drosophila melanogaster (Fruit fly).